The primary structure comprises 203 residues: dITP/XTP pyrophosphatase (203 aa).

8-13 contributes to the substrate binding site; that stretch reads SNNAGK. Positions 40 and 69 each coordinate Mg(2+). D69 (proton acceptor) is an active-site residue. Residues S70, 152–155, K175, and 180–181 each bind substrate; these read FGYD and HR.

The protein belongs to the HAM1 NTPase family. As to quaternary structure, homodimer. The cofactor is Mg(2+).

It carries out the reaction XTP + H2O = XMP + diphosphate + H(+). The enzyme catalyses dITP + H2O = dIMP + diphosphate + H(+). The catalysed reaction is ITP + H2O = IMP + diphosphate + H(+). Pyrophosphatase that catalyzes the hydrolysis of nucleoside triphosphates to their monophosphate derivatives, with a high preference for the non-canonical purine nucleotides XTP (xanthosine triphosphate), dITP (deoxyinosine triphosphate) and ITP. Seems to function as a house-cleaning enzyme that removes non-canonical purine nucleotides from the nucleotide pool, thus preventing their incorporation into DNA/RNA and avoiding chromosomal lesions. This Nitrosomonas europaea (strain ATCC 19718 / CIP 103999 / KCTC 2705 / NBRC 14298) protein is dITP/XTP pyrophosphatase.